We begin with the raw amino-acid sequence, 161 residues long: RNA pyrophosphohydrolase (161 aa).

One can recognise a Nudix hydrolase domain in the interval 6–149; sequence GFRPNVGIIL…KRDVYRKAMV (144 aa). A Nudix box motif is present at residues 38–59; the sequence is GGIQFGETPEQALFRELREEIG.

This sequence belongs to the Nudix hydrolase family. RppH subfamily. A divalent metal cation serves as cofactor.

In terms of biological role, accelerates the degradation of transcripts by removing pyrophosphate from the 5'-end of triphosphorylated RNA, leading to a more labile monophosphorylated state that can stimulate subsequent ribonuclease cleavage. The protein is RNA pyrophosphohydrolase of Acinetobacter baumannii (strain AB307-0294).